The following is a 502-amino-acid chain: Cytochrome P450 71B17 (502 aa).

The chain crosses the membrane as a helical span at residues 1–21; the sequence is MAISLLCLFLITFVSLTIVGC. C444 is a binding site for heme.

The protein belongs to the cytochrome P450 family. The cofactor is heme.

It is found in the membrane. The protein is Cytochrome P450 71B17 (CYP71B17) of Arabidopsis thaliana (Mouse-ear cress).